A 65-amino-acid polypeptide reads, in one-letter code: Gallinacin-12 (65 aa).

The N-terminal stretch at methionine 1–threonine 19 is a signal peptide. Disulfide bonds link cysteine 25/cysteine 54, cysteine 32/cysteine 47, and cysteine 37/cysteine 55.

The protein belongs to the beta-defensin family. As to expression, expressed in the large intestine, kidney liver, gall bladder, testis, ovary and male and female reproductive tracts. Expressed in the ovarian stroma and the theca and granulosa layers of the ovarian follicle.

The protein localises to the secreted. It localises to the cytoplasmic granule. In terms of biological role, has bactericidal activity. This chain is Gallinacin-12 (GAL12), found in Gallus gallus (Chicken).